The primary structure comprises 435 residues: Homoserine dehydrogenase (435 aa).

Positions 13, 14, and 104 each coordinate NADPH. Residue valine 14 participates in NAD(+) binding. Residues valine 14 and lysine 104 each contribute to the NADP(+) site. Na(+)-binding residues include glutamate 128, valine 131, glycine 133, and isoleucine 135. NADP(+) is bound by residues glycine 186 and glutamate 189. Residues glutamate 189 and aspartate 200 each contribute to the L-homoserine site. Catalysis depends on lysine 204, which acts as the Proton donor. Glycine 301 contacts NADPH. Glycine 301 serves as a coordination point for NAD(+). Glycine 301 contacts NADP(+). The 76-residue stretch at 354–429 (YLRVQAKDEP…CVEKPITMIR (76 aa)) folds into the ACT domain.

The protein belongs to the homoserine dehydrogenase family. Homotetramer. It depends on a metal cation as a cofactor.

It carries out the reaction L-homoserine + NAD(+) = L-aspartate 4-semialdehyde + NADH + H(+). The protein operates within amino-acid biosynthesis; L-methionine biosynthesis via de novo pathway; L-homoserine from L-aspartate: step 3/3. Its pathway is amino-acid biosynthesis; L-threonine biosynthesis; L-threonine from L-aspartate: step 3/5. With respect to regulation, neither NaCl nor KCl increase the activity. L-threonine and L-serine do not markedly inhibit the oxidation activity. In terms of biological role, catalyzes the conversion of L-aspartate-beta-semialdehyde (L-Asa) to L-homoserine (L-Hse), the third step in the biosynthesis of threonine and methionine from aspartate. Is highly specific for NAD(+), and displays an approximate 479-fold (kcat/Km) preference for NAD(+) over NADP(+). In Neisseria gonorrhoeae (strain ATCC 700825 / FA 1090), this protein is Homoserine dehydrogenase.